The following is a 217-amino-acid chain: NADH dehydrogenase (ubiquinone) 23 kDa subunit (217 aa).

The N-terminal 26 residues, 1 to 26 (MSLTMRIFTASRNGQRLFGSHGARLL), are a transit peptide targeting the mitochondrion. 4Fe-4S ferredoxin-type domains are found at residues 109-138 (RRYP…IEAE) and 148-177 (TRYD…EGPN). 8 residues coordinate [4Fe-4S] cluster: C118, C121, C124, C128, C157, C160, C163, and C167.

It belongs to the complex I 23 kDa subunit family. In terms of assembly, part of the mitochondrial membrane respiratory chain NADH dehydrogenase (Complex I). This is a component of the iron-sulfur (IP) fragment of the enzyme. Requires [4Fe-4S] cluster as cofactor. In terms of tissue distribution, expressed in muscles (at protein level).

It localises to the mitochondrion. The enzyme catalyses a ubiquinone + NADH + 5 H(+)(in) = a ubiquinol + NAD(+) + 4 H(+)(out). Its function is as follows. Core subunit of the mitochondrial membrane respiratory chain NADH dehydrogenase (Complex I) that is believed to belong to the minimal assembly required for catalysis. Complex I functions in the transfer of electrons from NADH to the respiratory chain. The immediate electron acceptor for the enzyme is believed to be ubiquinone. This chain is NADH dehydrogenase (ubiquinone) 23 kDa subunit, found in Drosophila melanogaster (Fruit fly).